The following is a 564-amino-acid chain: Dihydroxy-acid dehydratase (564 aa).

Aspartate 80 is a binding site for Mg(2+). Cysteine 121 is a [2Fe-2S] cluster binding site. Positions 122 and 123 each coordinate Mg(2+). Lysine 123 is modified (N6-carboxylysine). Position 194 (cysteine 194) interacts with [2Fe-2S] cluster. A Mg(2+)-binding site is contributed by glutamate 447. Serine 473 (proton acceptor) is an active-site residue.

It belongs to the IlvD/Edd family. Homodimer. Requires [2Fe-2S] cluster as cofactor. It depends on Mg(2+) as a cofactor.

It catalyses the reaction (2R)-2,3-dihydroxy-3-methylbutanoate = 3-methyl-2-oxobutanoate + H2O. The catalysed reaction is (2R,3R)-2,3-dihydroxy-3-methylpentanoate = (S)-3-methyl-2-oxopentanoate + H2O. It functions in the pathway amino-acid biosynthesis; L-isoleucine biosynthesis; L-isoleucine from 2-oxobutanoate: step 3/4. Its pathway is amino-acid biosynthesis; L-valine biosynthesis; L-valine from pyruvate: step 3/4. Functionally, functions in the biosynthesis of branched-chain amino acids. Catalyzes the dehydration of (2R,3R)-2,3-dihydroxy-3-methylpentanoate (2,3-dihydroxy-3-methylvalerate) into 2-oxo-3-methylpentanoate (2-oxo-3-methylvalerate) and of (2R)-2,3-dihydroxy-3-methylbutanoate (2,3-dihydroxyisovalerate) into 2-oxo-3-methylbutanoate (2-oxoisovalerate), the penultimate precursor to L-isoleucine and L-valine, respectively. The sequence is that of Dihydroxy-acid dehydratase from Listeria innocua serovar 6a (strain ATCC BAA-680 / CLIP 11262).